A 172-amino-acid chain; its full sequence is Small ribosomal subunit protein uS5 (172 aa).

The S5 DRBM domain occupies 16–79; sequence LKEKLVHINR…EDGKKNVVKV (64 aa).

Belongs to the universal ribosomal protein uS5 family. As to quaternary structure, part of the 30S ribosomal subunit. Contacts proteins S4 and S8.

Its function is as follows. With S4 and S12 plays an important role in translational accuracy. In terms of biological role, located at the back of the 30S subunit body where it stabilizes the conformation of the head with respect to the body. This chain is Small ribosomal subunit protein uS5, found in Prosthecochloris aestuarii (strain DSM 271 / SK 413).